A 223-amino-acid polypeptide reads, in one-letter code: DNA mismatch repair protein MutH (223 aa).

It belongs to the MutH family.

Its subcellular location is the cytoplasm. Its function is as follows. Sequence-specific endonuclease that cleaves unmethylated GATC sequences. It is involved in DNA mismatch repair. This is DNA mismatch repair protein MutH from Shewanella baltica (strain OS223).